Consider the following 223-residue polypeptide: Ribose-5-phosphate isomerase A (223 aa).

Substrate-binding positions include 32-35 (TGST), 83-86 (DGAD), and 96-99 (KGGG). E105 functions as the Proton acceptor in the catalytic mechanism. A substrate-binding site is contributed by K123.

Belongs to the ribose 5-phosphate isomerase family. Homodimer.

It carries out the reaction aldehydo-D-ribose 5-phosphate = D-ribulose 5-phosphate. Its pathway is carbohydrate degradation; pentose phosphate pathway; D-ribose 5-phosphate from D-ribulose 5-phosphate (non-oxidative stage): step 1/1. Functionally, catalyzes the reversible conversion of ribose-5-phosphate to ribulose 5-phosphate. This is Ribose-5-phosphate isomerase A from Acinetobacter baumannii (strain ATCC 17978 / DSM 105126 / CIP 53.77 / LMG 1025 / NCDC KC755 / 5377).